A 329-amino-acid polypeptide reads, in one-letter code: Capsular polysaccharide phosphotransferase WcwK (329 aa).

It belongs to the stealth family.

In Streptococcus pneumoniae, this protein is Capsular polysaccharide phosphotransferase WcwK (wcwK).